The chain runs to 108 residues: UPF0102 protein SO_0299 (108 aa).

Belongs to the UPF0102 family.

The protein is UPF0102 protein SO_0299 of Shewanella oneidensis (strain ATCC 700550 / JCM 31522 / CIP 106686 / LMG 19005 / NCIMB 14063 / MR-1).